The chain runs to 268 residues: MNIEVKMEKEKSLGNQALIRGLRLLDILSNYPNGCPLAKLAELANLNKSTAHRLLQGLQNEGYVKPANAAGSYRLTIKCLSIGQKVLSSMNIIHVASPYLEQLNLKLGETINFSKREDDHAIMIYKLEPTNGMLKTRAYIGQYLKLYCSAMGKIFLAYEKKVDYLSHYWQSHQREIKKLTRYTITELDDIKLELETIRQTAYAMDREENELGVTCIACPIFDSFGQVEYAISVSMSIYRLNKFGTDAFLQEIRKTAEQISLELGYENI.

In terms of domain architecture, HTH iclR-type spans 15–77 (NQALIRGLRL…NAAGSYRLTI (63 aa)). Positions 37 to 56 (LAKLAELANLNKSTAHRLLQ) form a DNA-binding region, H-T-H motif. Residues 92–265 (IIHVASPYLE…AEQISLELGY (174 aa)) form the IclR-ED domain.

This is an uncharacterized protein from Haemophilus influenzae (strain ATCC 51907 / DSM 11121 / KW20 / Rd).